A 259-amino-acid polypeptide reads, in one-letter code: Probable ABC transporter permease protein RP096 (259 aa).

The next 5 helical transmembrane spans lie at 13-35 (TIKFAQSVGIFSLFSFIAISSII), 49-69 (LFIGFHSLPVVAMTTFFSGAV), 148-168 (VIAAIITMPCLVLIGDIIGVM), 195-215 (PIDVISGLIKATVFGFIISII), and 237-257 (AVVNSSILILISNYLITELFF).

It belongs to the MlaE permease family.

The protein localises to the cell inner membrane. Functionally, could be part of an ABC transporter complex. This is Probable ABC transporter permease protein RP096 from Rickettsia prowazekii (strain Madrid E).